A 100-amino-acid polypeptide reads, in one-letter code: NADH-quinone oxidoreductase subunit K 2 (100 aa).

3 helical membrane-spanning segments follow: residues 2–22 (LAIE…TIGV), 29–49 (IVIF…FIAF), and 61–81 (FVFF…ALMI).

The protein belongs to the complex I subunit 4L family. As to quaternary structure, NDH-1 is composed of 14 different subunits. Subunits NuoA, H, J, K, L, M, N constitute the membrane sector of the complex.

It is found in the cell inner membrane. The enzyme catalyses a quinone + NADH + 5 H(+)(in) = a quinol + NAD(+) + 4 H(+)(out). Functionally, NDH-1 shuttles electrons from NADH, via FMN and iron-sulfur (Fe-S) centers, to quinones in the respiratory chain. The immediate electron acceptor for the enzyme in this species is believed to be ubiquinone. Couples the redox reaction to proton translocation (for every two electrons transferred, four hydrogen ions are translocated across the cytoplasmic membrane), and thus conserves the redox energy in a proton gradient. The chain is NADH-quinone oxidoreductase subunit K 2 from Citrifermentans bemidjiense (strain ATCC BAA-1014 / DSM 16622 / JCM 12645 / Bem) (Geobacter bemidjiensis).